The following is a 141-amino-acid chain: Nucleoside diphosphate kinase (141 aa).

ATP-binding residues include K11, F59, R87, T93, R104, and N114. The active-site Pros-phosphohistidine intermediate is H117.

The protein belongs to the NDK family. Homotetramer. Requires Mg(2+) as cofactor.

It is found in the cytoplasm. The enzyme catalyses a 2'-deoxyribonucleoside 5'-diphosphate + ATP = a 2'-deoxyribonucleoside 5'-triphosphate + ADP. The catalysed reaction is a ribonucleoside 5'-diphosphate + ATP = a ribonucleoside 5'-triphosphate + ADP. Major role in the synthesis of nucleoside triphosphates other than ATP. The ATP gamma phosphate is transferred to the NDP beta phosphate via a ping-pong mechanism, using a phosphorylated active-site intermediate. The sequence is that of Nucleoside diphosphate kinase from Chromobacterium violaceum (strain ATCC 12472 / DSM 30191 / JCM 1249 / CCUG 213 / NBRC 12614 / NCIMB 9131 / NCTC 9757 / MK).